The following is a 445-amino-acid chain: Probable glycine dehydrogenase (decarboxylating) subunit 1 (445 aa).

It belongs to the GcvP family. N-terminal subunit subfamily. In terms of assembly, the glycine cleavage system is composed of four proteins: P, T, L and H. In this organism, the P 'protein' is a heterodimer of two subunits.

It catalyses the reaction N(6)-[(R)-lipoyl]-L-lysyl-[glycine-cleavage complex H protein] + glycine + H(+) = N(6)-[(R)-S(8)-aminomethyldihydrolipoyl]-L-lysyl-[glycine-cleavage complex H protein] + CO2. Its function is as follows. The glycine cleavage system catalyzes the degradation of glycine. The P protein binds the alpha-amino group of glycine through its pyridoxal phosphate cofactor; CO(2) is released and the remaining methylamine moiety is then transferred to the lipoamide cofactor of the H protein. The sequence is that of Probable glycine dehydrogenase (decarboxylating) subunit 1 from Anaeromyxobacter dehalogenans (strain 2CP-1 / ATCC BAA-258).